We begin with the raw amino-acid sequence, 208 residues long: Imidazoleglycerol-phosphate dehydratase (208 aa).

This sequence belongs to the imidazoleglycerol-phosphate dehydratase family.

It localises to the cytoplasm. It catalyses the reaction D-erythro-1-(imidazol-4-yl)glycerol 3-phosphate = 3-(imidazol-4-yl)-2-oxopropyl phosphate + H2O. It functions in the pathway amino-acid biosynthesis; L-histidine biosynthesis; L-histidine from 5-phospho-alpha-D-ribose 1-diphosphate: step 6/9. The polypeptide is Imidazoleglycerol-phosphate dehydratase (Anaeromyxobacter dehalogenans (strain 2CP-1 / ATCC BAA-258)).